Here is a 330-residue protein sequence, read N- to C-terminus: Anthranilate phosphoribosyltransferase (330 aa).

5-phospho-alpha-D-ribose 1-diphosphate contacts are provided by residues glycine 75, 78-79, threonine 83, 85-88, 103-111, and alanine 115; these read GD, NVST, and KHGNRAASS. Residue glycine 75 participates in anthranilate binding. Serine 87 contributes to the Mg(2+) binding site. Asparagine 106 serves as a coordination point for anthranilate. Arginine 161 is an anthranilate binding site. Residues aspartate 220 and glutamate 221 each coordinate Mg(2+).

Belongs to the anthranilate phosphoribosyltransferase family. As to quaternary structure, homodimer. It depends on Mg(2+) as a cofactor.

The catalysed reaction is N-(5-phospho-beta-D-ribosyl)anthranilate + diphosphate = 5-phospho-alpha-D-ribose 1-diphosphate + anthranilate. It participates in amino-acid biosynthesis; L-tryptophan biosynthesis; L-tryptophan from chorismate: step 2/5. Functionally, catalyzes the transfer of the phosphoribosyl group of 5-phosphorylribose-1-pyrophosphate (PRPP) to anthranilate to yield N-(5'-phosphoribosyl)-anthranilate (PRA). This is Anthranilate phosphoribosyltransferase from Novosphingobium aromaticivorans (strain ATCC 700278 / DSM 12444 / CCUG 56034 / CIP 105152 / NBRC 16084 / F199).